A 506-amino-acid polypeptide reads, in one-letter code: MNAMAKLIMVQGTSSNVGKSILVTALCRIFKQDGYKVAPFKSQNMALNAFVTQEGGEIGRAQAVQAEACGIAPSVDMNPILMKPEADSKSQIVVNGKVDRTISAREYYEYAPLLLDTALAALNRLREQNDIVVIEGAGSPAEINLRQREIVNMRIAKTAGAPVLLAGDIDRGGVFASLIGTIDLLEPEERSYVKGYLINKFRGDASLLKPAIDVLEDRTSIPVLGIIPYLRNMAIAQEDSVYLDECKSGLGETDLDIAVIRLPRISNYDDFDALATDGASVRFVSKTGEIGNPDLIIIPGTKSTIPDMEYLWQNGLAETIIKKAGKGTHVLGVCGGYQILGKMIYDPHKTESETTELKGLGLLDTETTFEKEKSTTQVSGQVRFNNGLLADMAGCEVGGYEIHMGRTRLFTAQPAFQITKTPKGPADYLDGASNAEGTVLGTYIHGIFESDSFRRGFLNAIRRYKGIPERQAGYFDRDKEYDKLADIVRASIDMNKIYDILNEGIR.

Positions 254-453 constitute a GATase cobBQ-type domain; the sequence is DLDIAVIRLP…IHGIFESDSF (200 aa). Cysteine 334 acts as the Nucleophile in catalysis. Residue histidine 445 is part of the active site.

This sequence belongs to the CobB/CobQ family. CobQ subfamily.

The protein operates within cofactor biosynthesis; adenosylcobalamin biosynthesis. Its function is as follows. Catalyzes amidations at positions B, D, E, and G on adenosylcobyrinic A,C-diamide. NH(2) groups are provided by glutamine, and one molecule of ATP is hydrogenolyzed for each amidation. The polypeptide is Cobyric acid synthase (Dehalococcoides mccartyi (strain ATCC BAA-2266 / KCTC 15142 / 195) (Dehalococcoides ethenogenes (strain 195))).